The chain runs to 207 residues: MRHRILMLLLGLAVLVTAGCGFNLRGTTQVPPELQKLLLESSDPYGPLTRAIRQQLRLSNVTIVDDPMRKDLPALRIIGSSENQDTVSIFRNGVTAEYQLVLHVQAQVLIPGHDIYPIRVNIFRTFFDNPLTALAKEAEAEVLRQEMRDQAAQQLVRKLLVVHAAEIKNAQENGDTLTSSKRATGAAKMADVEEINIGKPAVSTPAQ.

Positions 1–19 (MRHRILMLLLGLAVLVTAG) are cleaved as a signal peptide. A lipid anchor (N-palmitoyl cysteine) is attached at C20. Residue C20 is the site of S-diacylglycerol cysteine attachment.

It belongs to the LptE lipoprotein family. Component of the lipopolysaccharide transport and assembly complex. Interacts with LptD.

It localises to the cell outer membrane. Together with LptD, is involved in the assembly of lipopolysaccharide (LPS) at the surface of the outer membrane. Required for the proper assembly of LptD. Binds LPS and may serve as the LPS recognition site at the outer membrane. The sequence is that of LPS-assembly lipoprotein LptE from Yersinia enterocolitica serotype O:8 / biotype 1B (strain NCTC 13174 / 8081).